A 301-amino-acid polypeptide reads, in one-letter code: uncharacterized protein (301 aa).

The Charge relay system role is filled by Thr47. Tyr136 (proton donor) is an active-site residue. Lys165 acts as the Schiff-base intermediate with substrate in catalysis.

This sequence belongs to the DapA family. In terms of assembly, homotetramer.

It localises to the cytoplasm. This is an uncharacterized protein from Thermofilum pendens (strain DSM 2475 / Hrk 5).